Consider the following 138-residue polypeptide: Histone H2B.8 (138 aa).

Basic and acidic residues predominate over residues 1 to 38; sequence MAPKAAEKKPAGKKPAEKAPAEKLPKAEKKITKEGGSE. The disordered stretch occupies residues 1–45; the sequence is MAPKAAEKKPAGKKPAEKAPAEKLPKAEKKITKEGGSEKKKKKSK. Alanine 2 carries the n,N,N-trimethylalanine; alternate modification. Alanine 2 carries the post-translational modification N,N-dimethylalanine; alternate. An N-methylalanine; alternate modification is found at alanine 2. N6-methyllysine is present on lysine 4. Residues lysine 8 and lysine 13 each carry the N6-acetyllysine modification. Lysine 14 is subject to N6,N6-dimethyllysine. N6-acetyllysine occurs at positions 18, 23, 29, and 30. Lysine 134 participates in a covalent cross-link: Glycyl lysine isopeptide (Lys-Gly) (interchain with G-Cter in ubiquitin).

This sequence belongs to the histone H2B family. The nucleosome is a histone octamer containing two molecules each of H2A, H2B, H3 and H4 assembled in one H3-H4 heterotetramer and two H2A-H2B heterodimers. The octamer wraps approximately 147 bp of DNA. In terms of processing, can be acetylated to form H2BK6ac, H2BK33ac and H2BK34ac. Monoubiquitinated by BRE1 to form H2BK143ub1 and deubiquitinated by UBP26. Required for heterochromatic histone H3 di- and trimethylation at H3K4me. May give a specific tag for epigenetic transcriptional activation.

The protein localises to the nucleus. It is found in the chromosome. In terms of biological role, core component of nucleosome. Nucleosomes wrap and compact DNA into chromatin, limiting DNA accessibility to the cellular machineries which require DNA as a template. Histones thereby play a central role in transcription regulation, DNA repair, DNA replication and chromosomal stability. DNA accessibility is regulated via a complex set of post-translational modifications of histones, also called histone code, and nucleosome remodeling. This Arabidopsis thaliana (Mouse-ear cress) protein is Histone H2B.8.